Consider the following 181-residue polypeptide: Small ribosomal subunit protein bS16 (181 aa).

Positions 150-181 are disordered; it reads KKAAEEAAKAAAEAPAEEAAPAEETATEAAAE. Low complexity predominate over residues 158–181; it reads KAAAEAPAEEAAPAEETATEAAAE.

This sequence belongs to the bacterial ribosomal protein bS16 family.

In Bacteroides fragilis (strain YCH46), this protein is Small ribosomal subunit protein bS16.